We begin with the raw amino-acid sequence, 89 residues long: Large ribosomal subunit protein bL27 (89 aa).

The interval 1–20 (MAHKKAGGSSRNGRDSIGRR) is disordered.

Belongs to the bacterial ribosomal protein bL27 family.

In Ruegeria pomeroyi (strain ATCC 700808 / DSM 15171 / DSS-3) (Silicibacter pomeroyi), this protein is Large ribosomal subunit protein bL27.